A 547-amino-acid chain; its full sequence is uncharacterized protein (547 aa).

Polar residues predominate over residues 1–18 (MEYHPSSQSPQVNPGMES). 2 disordered regions span residues 1-41 (MEYH…LQHP) and 80-165 (PSYP…VKRQ). Low complexity-rich tracts occupy residues 19-29 (QQGGYTYTYQQ) and 83-94 (PQSSSAPSNNSY). Residues 121 to 135 (VPSPSPIEMVPPSPP) are compositionally biased toward pro residues. Over residues 136-160 (KTGSNNSAPVTGKTVQSGNALNNSG) the composition is skewed to polar residues. Residues 174–201 (CLTCRKRRIKCDERKPICYNCIKSKRQC) constitute a DNA-binding region (zn(2)-C6 fungal-type).

The protein resides in the nucleus. This is an uncharacterized protein from Schizosaccharomyces pombe (strain 972 / ATCC 24843) (Fission yeast).